The primary structure comprises 506 residues: Aerotaxis receptor (506 aa).

The Cytoplasmic portion of the chain corresponds to 1–166; sequence MSSHPYVTQQ…PSLPLRWRAR (166 aa). Residues 167–186 form a helical membrane-spanning segment; that stretch reads GVMTLMFILLAAMLWFVAAP. Residues 187–190 are Periplasmic-facing; the sequence is VVTY. Residues 191-209 form a helical membrane-spanning segment; the sequence is ILCALVVLLASACFEWQIV. At 210–506 the chain is on the cytoplasmic side; the sequence is RPIENVAHQA…RLEDAVTVLH (297 aa). A Methyl-accepting transducer domain is found at 263–492; it reads QVSSVRNGSE…ESAQVSAMVK (230 aa).

The protein belongs to the methyl-accepting chemotaxis (MCP) protein family.

The protein localises to the cell inner membrane. Signal transducer for aerotaxis. The aerotactic response is the accumulation of cells around air bubbles. The nature of the sensory stimulus detected by this protein is the proton motive force or cellular redox state. It uses a FAD prosthetic group as a redox sensor to monitor oxygen levels. This Escherichia coli (strain K12) protein is Aerotaxis receptor (aer).